The following is a 764-amino-acid chain: MASSSSSSSNSSTSSSALSGRLPGARSANPRKARILGLFDAIQDAVGPPKQAAADRRTVEKTWKLMDKVVRLCQNPKLQLKNSPPYILDILPDTYQHLRLILSKYDDNQKLAQLSENEYFKIYIDSLMKKSKRAIRLFKEGKERMYEEQSQERRNLTKLSLIFSHMLAEIKAIFPSGQFQGDTFRITKADAAEFWRKFFGERTIVPWKIFRQCLHEVQQISSGLEAMALKSTIDLTCNDYISVFEFDIFARLFQPWSSILRNWNFLAVTHPGYMAFLTYDEVKARLQKYSLKHGSYIFRLSCTRLGQWAIGYVTAGGNILQTIPHNKPLFQALIDGSREGFYLYPDGRSYNPDLTDLCEPTPHDHIKVTQEQYELYCEMGSTFQLCKICAENDKDVKIEPCGHLMCTSCLTSWQESDGQGCPFCRCEIKGTEPIIVDPFDPRDENRCCSFNDSLCTPMFDFDDDDLREECLIMNRLASLRKMNERQNSPVTSPGSSPLLQRRKTPPDPVQIPHLNLPPVPPRLDLIQRGLARSPCASPTGSPKSSPCMARKQDKPLPAPPPPLREPPPPPERPPPIPPDSRTCRHLHHAENVPCRDQSTPNEAWCTRDLSGGNQPSVCRVTHDGSPKLGVSSSVLNGRHSRVSTEAGFMRHKHHKRRESPLETHRVYNGLSGNEEYDVPPRLSPPPPTITIHPTVICPLLANSASDKVRNSAEEDDSEYKIPSSHPVSSRLPLHCHSIKHFPRLCENGQCLSNGAHNGISEIKN.

Residues 1–19 are compositionally biased toward low complexity; the sequence is MASSSSSSSNSSTSSSALS. Residues 1–27 form a disordered region; sequence MASSSSSSSNSSTSSSALSGRLPGARS. The segment at 48-180 is 4H; it reads PPKQAAADRR…KAIFPSGQFQ (133 aa). Positions 48 to 356 constitute a Cbl-PTB domain; that stretch reads PPKQAAADRR…GRSYNPDLTD (309 aa). Residues 181–253 form an EF-hand-like region; sequence GDTFRITKAD…FEFDIFARLF (73 aa). Residues Asp-234, Thr-236, Asn-238, Tyr-240, and Glu-245 each coordinate Ca(2+). An SH2-like region spans residues 254–356; that stretch reads QPWSSILRNW…GRSYNPDLTD (103 aa). Arg-299 is a 4-O-phospho-L-tyrosine binding site. The interval 357–385 is linker; the sequence is LCEPTPHDHIKVTQEQYELYCEMGSTFQL. Residues 386–425 form an RING-type zinc finger; sequence CKICAENDKDVKIEPCGHLMCTSCLTSWQESDGQGCPFCR. Disordered stretches follow at residues 482 to 583 and 707 to 726; these read MNER…SRTC and KVRN…SSHP. Polar residues predominate over residues 485–498; that stretch reads RQNSPVTSPGSSPL. Residues 556–578 show a composition bias toward pro residues; it reads LPAPPPPLREPPPPPERPPPIPP.

Interacts with several SH3 domain-containing proteins and with poly-ubiquitinated proteins.

The protein localises to the cytoplasm. The catalysed reaction is S-ubiquitinyl-[E2 ubiquitin-conjugating enzyme]-L-cysteine + [acceptor protein]-L-lysine = [E2 ubiquitin-conjugating enzyme]-L-cysteine + N(6)-ubiquitinyl-[acceptor protein]-L-lysine.. The protein operates within protein modification; protein ubiquitination. Its function is as follows. E3 ubiquitin-protein ligase which accepts ubiquitin from specific E2 ubiquitin-conjugating enzymes, and transfers it to substrates, generally promoting their degradation by the proteasome. In Xenopus laevis (African clawed frog), this protein is E3 ubiquitin-protein ligase CBL-B-B (cblb-b).